The chain runs to 305 residues: Ribonuclease BN (305 aa).

Residues histidine 64, histidine 66, aspartate 68, histidine 69, histidine 141, aspartate 212, and histidine 270 each coordinate Zn(2+). The active-site Proton acceptor is the aspartate 68.

This sequence belongs to the RNase Z family. RNase BN subfamily. As to quaternary structure, homodimer. It depends on Zn(2+) as a cofactor.

Functionally, zinc phosphodiesterase, which has both exoribonuclease and endoribonuclease activities. The chain is Ribonuclease BN from Shigella flexneri.